Reading from the N-terminus, the 98-residue chain is Large ribosomal subunit protein mL53 (98 aa).

The protein belongs to the mitochondrion-specific ribosomal protein mL53 family. Component of the mitochondrial large ribosomal subunit (mt-LSU). Mature N.crassa 74S mitochondrial ribosomes consist of a small (37S) and a large (54S) subunit. The 37S small subunit contains a 16S ribosomal RNA (16S mt-rRNA) and 32 different proteins. The 54S large subunit contains a 23S rRNA (23S mt-rRNA) and 42 different proteins.

The protein localises to the mitochondrion. In terms of biological role, component of the mitochondrial ribosome (mitoribosome), a dedicated translation machinery responsible for the synthesis of mitochondrial genome-encoded proteins, including at least some of the essential transmembrane subunits of the mitochondrial respiratory chain. The mitoribosomes are attached to the mitochondrial inner membrane and translation products are cotranslationally integrated into the membrane. This is Large ribosomal subunit protein mL53 (mrpl44) from Neurospora crassa (strain ATCC 24698 / 74-OR23-1A / CBS 708.71 / DSM 1257 / FGSC 987).